The primary structure comprises 107 residues: Probable antitoxin TacA (107 aa).

Belongs to the TacA antitoxin family. In terms of assembly, forms a complex with cognate antitoxin TacT.

In terms of biological role, probable antitoxin component of a type II toxin-antitoxin (TA) system. Should neutralize cognate toxin TacT (y4aS). This is Probable antitoxin TacA from Sinorhizobium fredii (strain NBRC 101917 / NGR234).